The chain runs to 259 residues: MSRTPIMAGNWKMNLDHVAATSLVQDLGEALKAAGYDSSKSEAVVIPPFTDIRPVAIIIDGDKLPIAYGAQDISAHDDGAYTGEVSGAMLSKLGCRYVVVGHSERREYHNESDELVNAKAKKVIENGMTPIICCGEALEVRKAGKHVEHTVGQIKADLDGIPAEQVAKLVIAYEPIWAIGTGETATADDAQEVCQAIREAVKELYDAPTAEAVRIQYGGSVKPANVAEIMAKPDVDGALVGGASLKAGDFSKIVTFYEA.

Residue 10–12 (NWK) coordinates substrate. The active-site Electrophile is the His102. The Proton acceptor role is filled by Glu174. Substrate-binding positions include Gly180, Ser220, and 241–242 (GG).

Belongs to the triosephosphate isomerase family. Homodimer.

The protein localises to the cytoplasm. It carries out the reaction D-glyceraldehyde 3-phosphate = dihydroxyacetone phosphate. Its pathway is carbohydrate biosynthesis; gluconeogenesis. It participates in carbohydrate degradation; glycolysis; D-glyceraldehyde 3-phosphate from glycerone phosphate: step 1/1. Its function is as follows. Involved in the gluconeogenesis. Catalyzes stereospecifically the conversion of dihydroxyacetone phosphate (DHAP) to D-glyceraldehyde-3-phosphate (G3P). This is Triosephosphate isomerase from Cutibacterium acnes (strain DSM 16379 / KPA171202) (Propionibacterium acnes).